The sequence spans 450 residues: Hydrolase ffsE (450 aa).

The active-site Nucleophile is the Ser-266.

This sequence belongs to the AB hydrolase superfamily. FUS2 hydrolase family. In terms of assembly, homodimer.

It functions in the pathway mycotoxin biosynthesis. Hydrolase; part of the gene cluster that mediates the biosynthesis of the cytotoxic leucine-containing cytochalasans, including aspochalasin C, aspochalasin E, TMC-169, flavichalasine F, aspergillin PZ, aspochalasin M and flavichalasine G. The first step in the pathway is catalyzed by the hybrid PKS-NRPS ffsA that utilizes 8 units of malonyl-CoA to iteratively assemble the octaketide chain before addition of L-leucine by the C-terminal NRPS modules. Because ffsA lacks a designated enoylreductase (ER) domain, the required activity is provided the enoyl reductase fssC. The methyltransferase (MT) domain of ffsA catalyzes the alpha-methylation at C10 and C14 using S-adenosyl-L-methionine as the methyl-donating cosubstrate. Reduction by the hydrolyase ffsE, followed by dehydration and intra-molecular Diels-Alder cyclization by the Diels-Alderase ffsF then yield the required isoindolone-fused macrocycle. A number of oxidative steps catalyzed by the tailoring cytochrome P450 monooxygenase ffsD, the FAD-linked oxidoreductase ffsJ and the short-chain dehydrogenase/reductase ffsI, are further required to afford the final products. The sequence is that of Hydrolase ffsE from Aspergillus flavipes.